A 223-amino-acid polypeptide reads, in one-letter code: All-trans retinoic acid-induced differentiation factor (223 aa).

The first 25 residues, 1-25 (MASRESGGSRAAALLLVLGVERALA), serve as a signal peptide directing secretion. At 26-193 (LPEICTLCPG…YKCMRQGSFS (168 aa)) the chain is on the extracellular side. Positions 146-187 (QRDLCNSTGSPEMCPENGSCASDGPGLLQCVCADGFHGYKCM) constitute an EGF-like domain. Disulfide bonds link Cys-150–Cys-165, Cys-159–Cys-175, and Cys-177–Cys-186. A helical transmembrane segment spans residues 194 to 214 (LLMFFGILGSTTLAISILLWG). Topologically, residues 215–223 (TQRRKAKAS) are cytoplasmic.

Interacts with NELL1; the interaction promotes osteoblastic differentiation and mineralization. Interacts with SLC37A3; the interaction is direct and both proteins are mutually dependent for their stability.

It localises to the nucleus envelope. Its subcellular location is the cell membrane. The protein resides in the lysosome membrane. Functionally, promotes osteoblast cell differentiation and terminal mineralization. Plays a role in inducing the cell cycle arrest via inhibiting CCND1 expression in all-trans-retinoic acid (ATRA) signal pathway. In osteoclasts, forms a transporter complex with ATRAID for nitrogen-containing-bisphophonates (N-BPs) required for releasing N-BP molecules that have trafficked to lysosomes through fluid-phase endocytosis into the cytosol. This chain is All-trans retinoic acid-induced differentiation factor (Atraid), found in Mus musculus (Mouse).